Consider the following 107-residue polypeptide: MSEVLHINDADFESVVVNSDIPILLDFWAPWCGPCKMIAPVLDELAPEFAGKVKIVKMNVDDNQATPAQFGVRSIPTLLLIKNGQVVATQVGALPKTQLANFINQHI.

The Thioredoxin domain maps to 2 to 107 (SEVLHINDAD…QLANFINQHI (106 aa)). A disulfide bond links Cys-32 and Cys-35.

The protein belongs to the thioredoxin family.

Participates in various redox reactions through the reversible oxidation of its active center dithiol to a disulfide and catalyzes dithiol-disulfide exchange reactions. The sequence is that of Thioredoxin (trxA) from Haemophilus influenzae (strain ATCC 51907 / DSM 11121 / KW20 / Rd).